A 680-amino-acid polypeptide reads, in one-letter code: Methionine--tRNA ligase (680 aa).

A 'HIGH' region motif is present at residues 15–25 (PYANGPVHIGH). 4 residues coordinate Zn(2+): Cys147, Cys150, Cys160, and Cys163. The short motif at 332 to 336 (KISTS) is the 'KMSKS' region element. Thr335 provides a ligand contact to ATP. Residues 579 to 680 (DFLKLDIRVG…AEVAPGSQVK (102 aa)) form the tRNA-binding domain.

Belongs to the class-I aminoacyl-tRNA synthetase family. MetG type 1 subfamily. As to quaternary structure, homodimer. The cofactor is Zn(2+).

It localises to the cytoplasm. It carries out the reaction tRNA(Met) + L-methionine + ATP = L-methionyl-tRNA(Met) + AMP + diphosphate. In terms of biological role, is required not only for elongation of protein synthesis but also for the initiation of all mRNA translation through initiator tRNA(fMet) aminoacylation. The polypeptide is Methionine--tRNA ligase (Porphyromonas gingivalis (strain ATCC 33277 / DSM 20709 / CIP 103683 / JCM 12257 / NCTC 11834 / 2561)).